Consider the following 474-residue polypeptide: Gasdermin-C (474 aa).

Residues 1-237 (MLYTFDQVSK…TCAILLSANA (237 aa)) form a triggers pyroptosis region.

This sequence belongs to the gasdermin family. In terms of assembly, homooligomer; homooligomeric ring-shaped pore complex containing 27-28 subunits when inserted in the membrane. In terms of processing, cleavage by CASP8 relieves autoinhibition by releasing the N-terminal moiety (Gasdermin-C, N-terminal) that initiates pyroptosis. Post-translationally, palmitoylated.

The protein localises to the cytoplasm. It is found in the cytosol. Its subcellular location is the cell membrane. The full-length protein before cleavage is inactive: intramolecular interactions between N- and C-terminal domains mediate autoinhibition in the absence of activation signal. The intrinsic pyroptosis-inducing activity is carried by the released N-terminal moiety (Gasdermin-C, N-terminal) following cleavage by caspase CASP8. Functionally, this form constitutes the precursor of the pore-forming protein: upon cleavage, the released N-terminal moiety (Gasdermin-C, N-terminal) binds to membranes and forms pores, triggering pyroptosis. Pore-forming protein that causes membrane permeabilization and pyroptosis. Produced by the cleavage of gasdermin-C by caspase CASP8 in response to death signals. After cleavage, moves to the plasma membrane where it strongly binds to membrane inner leaflet lipids. Homooligomerizes within the membrane and forms pores of 10-15 nanometers (nm) of inner diameter, triggering pyroptosis. The sequence is that of Gasdermin-C from Rattus norvegicus (Rat).